The chain runs to 221 residues: Probable septum site-determining protein MinC (221 aa).

It belongs to the MinC family. As to quaternary structure, interacts with MinD and FtsZ.

Functionally, cell division inhibitor that blocks the formation of polar Z ring septums. Rapidly oscillates between the poles of the cell to destabilize FtsZ filaments that have formed before they mature into polar Z rings. Prevents FtsZ polymerization. The protein is Probable septum site-determining protein MinC of Shewanella denitrificans (strain OS217 / ATCC BAA-1090 / DSM 15013).